The primary structure comprises 558 residues: Dihydroxy-acid dehydratase (558 aa).

Cys-50 is a binding site for [2Fe-2S] cluster. Mg(2+) is bound at residue Asp-82. Cys-123 serves as a coordination point for [2Fe-2S] cluster. 2 residues coordinate Mg(2+): Asp-124 and Lys-125. Lys-125 is modified (N6-carboxylysine). Position 195 (Cys-195) interacts with [2Fe-2S] cluster. A Mg(2+)-binding site is contributed by Glu-447. Ser-472 serves as the catalytic Proton acceptor.

Belongs to the IlvD/Edd family. Homodimer. Requires [2Fe-2S] cluster as cofactor. It depends on Mg(2+) as a cofactor.

The catalysed reaction is (2R)-2,3-dihydroxy-3-methylbutanoate = 3-methyl-2-oxobutanoate + H2O. It carries out the reaction (2R,3R)-2,3-dihydroxy-3-methylpentanoate = (S)-3-methyl-2-oxopentanoate + H2O. It functions in the pathway amino-acid biosynthesis; L-isoleucine biosynthesis; L-isoleucine from 2-oxobutanoate: step 3/4. Its pathway is amino-acid biosynthesis; L-valine biosynthesis; L-valine from pyruvate: step 3/4. Functionally, functions in the biosynthesis of branched-chain amino acids. Catalyzes the dehydration of (2R,3R)-2,3-dihydroxy-3-methylpentanoate (2,3-dihydroxy-3-methylvalerate) into 2-oxo-3-methylpentanoate (2-oxo-3-methylvalerate) and of (2R)-2,3-dihydroxy-3-methylbutanoate (2,3-dihydroxyisovalerate) into 2-oxo-3-methylbutanoate (2-oxoisovalerate), the penultimate precursor to L-isoleucine and L-valine, respectively. This is Dihydroxy-acid dehydratase from Saccharolobus islandicus (strain M.16.27) (Sulfolobus islandicus).